We begin with the raw amino-acid sequence, 492 residues long: Bifunctional purine biosynthesis protein PurH (492 aa).

Residues 1–144 enclose the MGS-like domain; the sequence is MKKAILSVSN…KNYKHVTTIV (144 aa).

Belongs to the PurH family.

It carries out the reaction (6R)-10-formyltetrahydrofolate + 5-amino-1-(5-phospho-beta-D-ribosyl)imidazole-4-carboxamide = 5-formamido-1-(5-phospho-D-ribosyl)imidazole-4-carboxamide + (6S)-5,6,7,8-tetrahydrofolate. The catalysed reaction is IMP + H2O = 5-formamido-1-(5-phospho-D-ribosyl)imidazole-4-carboxamide. It functions in the pathway purine metabolism; IMP biosynthesis via de novo pathway; 5-formamido-1-(5-phospho-D-ribosyl)imidazole-4-carboxamide from 5-amino-1-(5-phospho-D-ribosyl)imidazole-4-carboxamide (10-formyl THF route): step 1/1. It participates in purine metabolism; IMP biosynthesis via de novo pathway; IMP from 5-formamido-1-(5-phospho-D-ribosyl)imidazole-4-carboxamide: step 1/1. This chain is Bifunctional purine biosynthesis protein PurH, found in Staphylococcus aureus (strain USA300).